The chain runs to 184 residues: Shikimate kinase (184 aa).

An ATP-binding site is contributed by 20-25; the sequence is GVGKSR. Serine 24 provides a ligand contact to Mg(2+). Residues aspartate 42, arginine 66, and glycine 88 each coordinate substrate. Arginine 127 is an ATP binding site. Arginine 146 lines the substrate pocket. An ATP-binding site is contributed by arginine 162.

Belongs to the shikimate kinase family. As to quaternary structure, monomer. Mg(2+) is required as a cofactor.

Its subcellular location is the cytoplasm. It carries out the reaction shikimate + ATP = 3-phosphoshikimate + ADP + H(+). Its pathway is metabolic intermediate biosynthesis; chorismate biosynthesis; chorismate from D-erythrose 4-phosphate and phosphoenolpyruvate: step 5/7. Catalyzes the specific phosphorylation of the 3-hydroxyl group of shikimic acid using ATP as a cosubstrate. The polypeptide is Shikimate kinase (Thermus thermophilus (strain ATCC 27634 / DSM 579 / HB8)).